We begin with the raw amino-acid sequence, 845 residues long: MSKLQQFPLSKGWSFRDNEATSEDAWMPVPVVPSVVHQDLQANNKLKDPYIGFNELEARWVNEKSWTYKTVFQKPAAPAGSCIVLAFDGLDTFAKVKLDGNVILENDNMFLARRVDVTKALEAEGDHVLEIDFDCAFLRAKELRKQDPRHNWASFNGDPSRLSVRKAQYHWGWDWGPVLMTAGIWREVRLEVYSARVADLWTEVQLASDHQSAQVTAFVEVESVHSGSHRACFTLSLHGQEITREEIGVTENGTAKATFDVKEPSLWWPHGYGDATLYEVSVSLVKEQEELHRVSKKFGIRTAEVIQRPDKHGKSFFFRVNGVDIFCGGSCWIPADNLLPSITAERYRKWIELMVHGRQVMIRVWGGGIYEDNSFYDACDELGVLVWQDFMFGCGNYPTWPNLLESIRKESVYNVRRLRHHPSIVIWVGNNEDYQVQEQAGLTYNYEDKDPENWLKTDFPARYIYEKLLPEVVQEYSPGTFYHPGSPWGDGKTTSDPTVGDMHQWNVWHGTQEKYQIFDTLGGRFNSEFGMEAFPHMSTIDYFVENEADKYPQSHVLDFHNKADGHERRIATYLVENLRTATDLETHIYLTQVVQAETMMFGYRGWRRQWGDERHCGGALLWQLNDCWPTISWAIVDYFLRPKPAFYAVARVLNPIAVGVRREHHDWSVTHAQPPKTSKFELWVASSRQQEIQGTVELRFLSVNTGLEVRERIVHENVSIVPNGTTNLIVDGLIDHTVHSEPHVLAARIWVDGQLVARDVDWPQPFKYLDLSDRGLEVKKISESEDEQTLLISTKKPVKCLVFEEREGVRISDSAMDIVPGDDQRVTIKGLKPGDAPLKYKFLGQ.

N-linked (GlcNAc...) asparagine glycosylation occurs at N252. The Proton donor role is filled by E432. N717 and N723 each carry an N-linked (GlcNAc...) asparagine glycan.

The protein belongs to the glycosyl hydrolase 2 family. Beta-mannosidase B subfamily.

The catalysed reaction is Hydrolysis of terminal, non-reducing beta-D-mannose residues in beta-D-mannosides.. The protein operates within glycan metabolism; N-glycan degradation. Exoglycosidase that cleaves the single beta-linked mannose residue from the non-reducing end of beta-mannosidic oligosaccharides of various complexity and length. Prefers mannobiose over mannotriose and has no activity against polymeric mannan. Is also severely restricted by galactosyl substitutions at the +1 subsite. The chain is Beta-mannosidase B (mndB) from Aspergillus fumigatus (strain ATCC MYA-4609 / CBS 101355 / FGSC A1100 / Af293) (Neosartorya fumigata).